Reading from the N-terminus, the 96-residue chain is uncharacterized protein (96 aa).

Cys-10, Cys-16, and Cys-55 together coordinate [3Fe-4S] cluster. Positions 67–96 (AGDGERASADPAPSPAEAERHAAKDQHNLG) are disordered. Residues 83 to 96 (EAERHAAKDQHNLG) are compositionally biased toward basic and acidic residues.

[3Fe-4S] cluster serves as cofactor.

In terms of biological role, electron transport protein for the cytochrome systems. This is an uncharacterized protein from Bradyrhizobium diazoefficiens (strain JCM 10833 / BCRC 13528 / IAM 13628 / NBRC 14792 / USDA 110).